Reading from the N-terminus, the 878-residue chain is MSQYVSSMIKYAQSGDSFNILIKDNAKKITEKQFSLAYVECPRFRREGDEPFAFEAQEFSRRLVVGRPASVSTLYVIPTSKREYGRIRTSEFDLAESLLREGLAKLRPEATRNEGTSENSYFVSLEEAQDHAQQYKLGIWGPSDDVVVTEKANPANPAKFLKAHKGKKLNGIVETIRNGDQVRVRLFLSPKQHQLVTISLAGVRCPRSTFTATSPEQTSSEQEPCGDEAKQFVVTRLLQRNVVIELLDLAPNGVSFLGNVLHPAGNIATFLLSSGLGRVADNHISALGPETMQSLRTIERKAKISRLGIWKNISVSIPDINSLSLKDYSAVVSRVISTDTLEVRKDNGVECRIQLSSIRHPRPSNEKEAPYQLEAREFLRKKIIGKRVQVSLDFIRPGQNDLPAINNCTVKLSDGTNVALMVVKSGYATVIRYRMDSVDRSPIYDFLIEAEKAAQEGRKGMWSGKKPAYENIVNASESSLRSRQYLSSLQRTRKLSVIIENVISGSRFRCFCPKENCYFMFACAGIRTPRTARNDQEKGEPFAEESLSLAKSLLQHDAQVEILSVDNNGCFLGDIYVNHDTNFALKLLSQGLAWCQGYASQSNVQYSQYHDTEAAAKEQKVGMWHDYVPPEKKAASTEKESENTVKEPIYLDIVLSDIAEDGKFSFQIIGTGIQQLETLMSDLGSLKKSFKPSEKINVGMNVAAISALDNAMYRGRVLRCDRENQAADVLLYDYGSVEQIPFKNISSLPDTYTKLKPQAQLARLSYVQLPPPSSDYYEDARLVFRELAMNKGLVAKVDGHEGNVYSVTLYNPSDGSDFSDCINAQLVALGMASVIPKKKTSHFEKDTASLNILEEHQQEARLNHIGFWVYGDPLEYED.

TNase-like domains lie at 3–142 (QYVS…IWGP) and 167–312 (KKLN…IWKN). Position 316 is a phosphoserine (S316). TNase-like domains follow at residues 326–464 (KDYS…MWSG) and 493–626 (RKLS…MWHD). The Tudor domain maps to 695 to 755 (KINVGMNVAA…SSLPDTYTKL (61 aa)).

The protein localises to the cytoplasm. Its subcellular location is the cytosol. This Schizosaccharomyces pombe (strain 972 / ATCC 24843) (Fission yeast) protein is Staphylococcal nuclease domain-containing protein 1.